Reading from the N-terminus, the 162-residue chain is MRLDQVARSLLLKEFVSGFALAMRYLFKPKATINYPFEMGHRSPRFRGEHALRRYPNGEERCIACKLCEAICPAQAITIEAGPRRNDGTRRTTRYDIDMVKCIYCGMCQEACPVDAIVEGPNFEFSVETREELLYDKQKLLANGDRWEREIARNIAADAPYR.

4Fe-4S ferredoxin-type domains follow at residues 52 to 82 (LRRY…IEAG) and 93 to 122 (TRYD…EGPN). [4Fe-4S] cluster is bound by residues C62, C65, C68, C72, C102, C105, C108, and C112.

Belongs to the complex I 23 kDa subunit family. As to quaternary structure, NDH-1 is composed of 14 different subunits. Subunits NuoA, H, J, K, L, M, N constitute the membrane sector of the complex. It depends on [4Fe-4S] cluster as a cofactor.

Its subcellular location is the cell inner membrane. It catalyses the reaction a quinone + NADH + 5 H(+)(in) = a quinol + NAD(+) + 4 H(+)(out). Its function is as follows. NDH-1 shuttles electrons from NADH, via FMN and iron-sulfur (Fe-S) centers, to quinones in the respiratory chain. The immediate electron acceptor for the enzyme in this species is believed to be ubiquinone. Couples the redox reaction to proton translocation (for every two electrons transferred, four hydrogen ions are translocated across the cytoplasmic membrane), and thus conserves the redox energy in a proton gradient. This is NADH-quinone oxidoreductase subunit I from Methylobacterium nodulans (strain LMG 21967 / CNCM I-2342 / ORS 2060).